The sequence spans 490 residues: Inosine-5'-monophosphate dehydrogenase (490 aa).

2 consecutive CBS domains span residues 96 to 154 (MIIN…SKPV) and 158 to 218 (MTKE…CKDE). NAD(+) contacts are provided by residues Asp-252 and 302–304 (GVG). Residues Gly-304 and Gly-306 each coordinate K(+). Ser-307 is an IMP binding site. A K(+)-binding site is contributed by Cys-309. Catalysis depends on Cys-309, which acts as the Thioimidate intermediate. Residues 342–344 (DGG), 365–366 (GN), and 389–393 (YRGMG) each bind IMP. The Proton acceptor role is filled by Arg-406. An IMP-binding site is contributed by Glu-418. 3 residues coordinate K(+): Glu-472, Ser-473, and His-474.

It belongs to the IMPDH/GMPR family. In terms of assembly, homotetramer. The cofactor is K(+).

The enzyme catalyses IMP + NAD(+) + H2O = XMP + NADH + H(+). Its pathway is purine metabolism; XMP biosynthesis via de novo pathway; XMP from IMP: step 1/1. With respect to regulation, mycophenolic acid (MPA) is a non-competitive inhibitor that prevents formation of the closed enzyme conformation by binding to the same site as the amobile flap. In contrast, mizoribine monophosphate (MZP) is a competitive inhibitor that induces the closed conformation. MPA is a potent inhibitor of mammalian IMPDHs but a poor inhibitor of the bacterial enzymes. MZP is a more potent inhibitor of bacterial IMPDH. In terms of biological role, catalyzes the conversion of inosine 5'-phosphate (IMP) to xanthosine 5'-phosphate (XMP), the first committed and rate-limiting step in the de novo synthesis of guanine nucleotides, and therefore plays an important role in the regulation of cell growth. The sequence is that of Inosine-5'-monophosphate dehydrogenase from Aquifex aeolicus (strain VF5).